Consider the following 382-residue polypeptide: Queuine tRNA-ribosyltransferase (382 aa).

The Proton acceptor role is filled by Asp96. Residues 96 to 100 (DSGGF), Asp151, Gln194, and Gly221 contribute to the substrate site. The tract at residues 252-258 (GVGAPDS) is RNA binding. The active-site Nucleophile is the Asp271. Positions 276–280 (TRIAR) are RNA binding; important for wobble base 34 recognition. Residues Cys309, Cys311, Cys314, and His340 each coordinate Zn(2+).

It belongs to the queuine tRNA-ribosyltransferase family. Homodimer. Within each dimer, one monomer is responsible for RNA recognition and catalysis, while the other monomer binds to the replacement base PreQ1. It depends on Zn(2+) as a cofactor.

It catalyses the reaction 7-aminomethyl-7-carbaguanine + guanosine(34) in tRNA = 7-aminomethyl-7-carbaguanosine(34) in tRNA + guanine. Its pathway is tRNA modification; tRNA-queuosine biosynthesis. Its function is as follows. Catalyzes the base-exchange of a guanine (G) residue with the queuine precursor 7-aminomethyl-7-deazaguanine (PreQ1) at position 34 (anticodon wobble position) in tRNAs with GU(N) anticodons (tRNA-Asp, -Asn, -His and -Tyr). Catalysis occurs through a double-displacement mechanism. The nucleophile active site attacks the C1' of nucleotide 34 to detach the guanine base from the RNA, forming a covalent enzyme-RNA intermediate. The proton acceptor active site deprotonates the incoming PreQ1, allowing a nucleophilic attack on the C1' of the ribose to form the product. After dissociation, two additional enzymatic reactions on the tRNA convert PreQ1 to queuine (Q), resulting in the hypermodified nucleoside queuosine (7-(((4,5-cis-dihydroxy-2-cyclopenten-1-yl)amino)methyl)-7-deazaguanosine). The protein is Queuine tRNA-ribosyltransferase of Lactococcus lactis subsp. cremoris (strain SK11).